Here is a 667-residue protein sequence, read N- to C-terminus: Threonine--tRNA ligase (667 aa).

The TGS domain maps to 3 to 64 (DMIRVTLPDG…EEDTNLALVT (62 aa)). Residues 252-561 (DHRRLGQEMD…LIEHFVGRFP (310 aa)) form a catalytic region. Positions 357, 408, and 538 each coordinate Zn(2+).

Belongs to the class-II aminoacyl-tRNA synthetase family. Homodimer. Requires Zn(2+) as cofactor.

The protein localises to the cytoplasm. It catalyses the reaction tRNA(Thr) + L-threonine + ATP = L-threonyl-tRNA(Thr) + AMP + diphosphate + H(+). Its function is as follows. Catalyzes the attachment of threonine to tRNA(Thr) in a two-step reaction: L-threonine is first activated by ATP to form Thr-AMP and then transferred to the acceptor end of tRNA(Thr). Also edits incorrectly charged L-seryl-tRNA(Thr). This is Threonine--tRNA ligase from Sphingopyxis alaskensis (strain DSM 13593 / LMG 18877 / RB2256) (Sphingomonas alaskensis).